The primary structure comprises 512 residues: Alpha-amylase 1 (512 aa).

Residues 1-25 form the signal peptide; sequence MRFSTEGFTSKVVAAILAFSRLVSA. A disulfide bridge links C66 with C74. W119 contributes to the substrate binding site. N157 is a binding site for Ca(2+). Substrate is bound at residue H158. Residues C186 and C200 are joined by a disulfide bond. Ca(2+) contacts are provided by E198 and D211. N233 is a glycosylation site (N-linked (GlcNAc...) asparagine). Residue R240 participates in substrate binding. Residues D242, H246, and E266 each coordinate Ca(2+). Catalysis depends on D242, which acts as the Nucleophile. 245 to 246 is a substrate binding site; sequence KH. E266 functions as the Proton donor in the catalytic mechanism. G270 lines the substrate pocket. The cysteines at positions 276 and 319 are disulfide-linked. 2 residues coordinate substrate: D333 and R380. Cysteines 475 and 510 form a disulfide.

The protein belongs to the glycosyl hydrolase 13 family. It depends on Ca(2+) as a cofactor.

Its subcellular location is the secreted. The catalysed reaction is Endohydrolysis of (1-&gt;4)-alpha-D-glucosidic linkages in polysaccharides containing three or more (1-&gt;4)-alpha-linked D-glucose units.. Alpha-amylase expression underlies catabolite repression by glucose. This Schwanniomyces occidentalis (Yeast) protein is Alpha-amylase 1 (AMY1).